We begin with the raw amino-acid sequence, 491 residues long: Glutamyl-tRNA(Gln) amidotransferase subunit A (491 aa).

Active-site charge relay system residues include Lys-77 and Ser-152. The Acyl-ester intermediate role is filled by Ser-176.

The protein belongs to the amidase family. GatA subfamily. Heterotrimer of A, B and C subunits.

It catalyses the reaction L-glutamyl-tRNA(Gln) + L-glutamine + ATP + H2O = L-glutaminyl-tRNA(Gln) + L-glutamate + ADP + phosphate + H(+). Functionally, allows the formation of correctly charged Gln-tRNA(Gln) through the transamidation of misacylated Glu-tRNA(Gln) in organisms which lack glutaminyl-tRNA synthetase. The reaction takes place in the presence of glutamine and ATP through an activated gamma-phospho-Glu-tRNA(Gln). This Chlamydia trachomatis serovar A (strain ATCC VR-571B / DSM 19440 / HAR-13) protein is Glutamyl-tRNA(Gln) amidotransferase subunit A.